The following is a 394-amino-acid chain: Phosphopentomutase (394 aa).

Positions 14, 287, 292, 328, 329, and 340 each coordinate Mn(2+).

This sequence belongs to the phosphopentomutase family. Mn(2+) serves as cofactor.

It localises to the cytoplasm. The catalysed reaction is 2-deoxy-alpha-D-ribose 1-phosphate = 2-deoxy-D-ribose 5-phosphate. It carries out the reaction alpha-D-ribose 1-phosphate = D-ribose 5-phosphate. The protein operates within carbohydrate degradation; 2-deoxy-D-ribose 1-phosphate degradation; D-glyceraldehyde 3-phosphate and acetaldehyde from 2-deoxy-alpha-D-ribose 1-phosphate: step 1/2. In terms of biological role, isomerase that catalyzes the conversion of deoxy-ribose 1-phosphate (dRib-1-P) and ribose 1-phosphate (Rib-1-P) to deoxy-ribose 5-phosphate (dRib-5-P) and ribose 5-phosphate (Rib-5-P), respectively. This Listeria monocytogenes serovar 1/2a (strain ATCC BAA-679 / EGD-e) protein is Phosphopentomutase.